The primary structure comprises 149 residues: Arginine repressor (149 aa).

Belongs to the ArgR family.

It is found in the cytoplasm. It functions in the pathway amino-acid biosynthesis; L-arginine biosynthesis [regulation]. In terms of biological role, regulates arginine biosynthesis genes. This Alkaliphilus oremlandii (strain OhILAs) (Clostridium oremlandii (strain OhILAs)) protein is Arginine repressor.